Here is a 443-residue protein sequence, read N- to C-terminus: Exodeoxyribonuclease 7 large subunit (443 aa).

It belongs to the XseA family. In terms of assembly, heterooligomer composed of large and small subunits.

It localises to the cytoplasm. The enzyme catalyses Exonucleolytic cleavage in either 5'- to 3'- or 3'- to 5'-direction to yield nucleoside 5'-phosphates.. Its function is as follows. Bidirectionally degrades single-stranded DNA into large acid-insoluble oligonucleotides, which are then degraded further into small acid-soluble oligonucleotides. This chain is Exodeoxyribonuclease 7 large subunit, found in Legionella pneumophila (strain Corby).